A 398-amino-acid polypeptide reads, in one-letter code: MSKLVLVLNCGSSSLKFAVVDAENGEEHLSGLAECLHLPEARIKWKLDGKHEAQLGNGAAHEEALAFMVETILASKPELSENLAAIGHRVVHGGEQFTQSALITDDVLKGIEDCATLAPLHNPAHIIGIKAAQKSFPALKNVAVFDTAFHQTMPEESYLYALPYNLYKEHGIRRYGMHGTSHLFITREVAGLLNKPVEEVNIINCHLGNGASVCAVKNGQSVDTSMGLTPLEGLVMGTRCGDIDPAIIFHLHDTLGYSVEKINTMLTKESGLQGLTEVTSDCRFVEDNYGEKEEATRAMDVFCHRLAKYVAGYTATLDGRLDAITFTGGIGENSAPIREMVLNRLGIFGIEVDSEANLKARFGGEGVITTENSRIPAMVISTNEELVIAEDTARLAGL.

Asn-9 serves as a coordination point for Mg(2+). Residue Lys-16 coordinates ATP. Residue Arg-89 coordinates substrate. Residue Asp-146 is the Proton donor/acceptor of the active site. Residues 206 to 210, 281 to 283, and 329 to 333 each bind ATP; these read HLGNG, DCR, and GIGEN. Mg(2+) is bound at residue Glu-384.

Belongs to the acetokinase family. Homodimer. Mg(2+) is required as a cofactor. Mn(2+) serves as cofactor.

Its subcellular location is the cytoplasm. The catalysed reaction is acetate + ATP = acetyl phosphate + ADP. It functions in the pathway metabolic intermediate biosynthesis; acetyl-CoA biosynthesis; acetyl-CoA from acetate: step 1/2. Catalyzes the formation of acetyl phosphate from acetate and ATP. Can also catalyze the reverse reaction. In Vibrio parahaemolyticus serotype O3:K6 (strain RIMD 2210633), this protein is Acetate kinase 1.